The primary structure comprises 214 residues: Adenylate kinase (214 aa).

Gly-10–Thr-15 lines the ATP pocket. The NMP stretch occupies residues Ser-30 to Val-59. AMP contacts are provided by residues Thr-31, Arg-36, Lys-57–Val-59, Gly-85–Arg-88, and Gln-92. The segment at Gly-122–Asp-159 is LID. Residues Arg-123 and Ser-132–Tyr-133 contribute to the ATP site. Arg-156 and Arg-167 together coordinate AMP. Gln-200 is an ATP binding site.

This sequence belongs to the adenylate kinase family. As to quaternary structure, monomer.

Its subcellular location is the cytoplasm. The catalysed reaction is AMP + ATP = 2 ADP. It participates in purine metabolism; AMP biosynthesis via salvage pathway; AMP from ADP: step 1/1. Its function is as follows. Catalyzes the reversible transfer of the terminal phosphate group between ATP and AMP. Plays an important role in cellular energy homeostasis and in adenine nucleotide metabolism. The sequence is that of Adenylate kinase from Haemophilus influenzae (strain PittEE).